Consider the following 456-residue polypeptide: Protein shifted (456 aa).

Positions 1-30 (MTHQGIGCLVKWLYLVLIVHTLLCIGQLEC) are cleaved as a signal peptide. The disordered stretch occupies residues 34-112 (HHNRNNNNNN…GGGGSRHNRN (79 aa)). A compositionally biased stretch (basic and acidic residues) spans 44 to 55 (RRADSSSSEEGH). The N-linked (GlcNAc...) asparagine glycan is linked to asparagine 57. Over residues 77 to 87 (HQPRRGQRKKQ) the composition is skewed to basic residues. Positions 88 to 107 (QGGGGGGSGGGGGNGGGGGS) are enriched in gly residues. The 143-residue stretch at 119–261 (LWINEQQLKM…PIRLNFKKEC (143 aa)) folds into the WIF domain. Asparagine 173, asparagine 217, and asparagine 227 each carry an N-linked (GlcNAc...) asparagine glycan. Intrachain disulfides connect cysteine 224–cysteine 261, cysteine 283–cysteine 293, cysteine 287–cysteine 299, cysteine 301–cysteine 310, cysteine 315–cysteine 325, cysteine 319–cysteine 331, cysteine 333–cysteine 342, cysteine 347–cysteine 357, cysteine 351–cysteine 363, cysteine 365–cysteine 374, cysteine 379–cysteine 389, cysteine 383–cysteine 395, cysteine 397–cysteine 406, cysteine 416–cysteine 423, cysteine 418–cysteine 429, and cysteine 431–cysteine 440. EGF-like domains follow at residues 279 to 311 (TLQE…QYCE), 315 to 342 (CFPQ…GTQC), 343 to 375 (EGGI…LRCE), 376 to 407 (YSKC…DHCE), and 412 to 441 (QRSI…RHCN). Asparagine 324 is a glycosylation site (N-linked (GlcNAc...) asparagine). Asparagine 420 is a glycosylation site (N-linked (GlcNAc...) asparagine).

In terms of assembly, interacts with hh. As to expression, at the blastoderm stage, it is ubiquitously expressed. As embryogenesis continues, it is expressed in the epidermis and central nervous system, this expression being segmentally modulated. Also highly expressed at the foregut and hindgut throughout embryogenesis. In third instar wing imaginal disks, it is highly expressed in the most anterior and posterior parts of the disk and weakly expressed at the antero/posterior (A/P) compartment border. In the leg disks and the antenna part of the eye-antennal imaginal disk it is also weakly expressed at the A/P compartment border. Weakly expressed in the morphogenetic furrow in the eye primordium.

Its subcellular location is the secreted. The protein resides in the extracellular space. It localises to the extracellular matrix. Required for normal accumulation and movement of lipid-modified hedgehog (hh) morphogen. May act by stabilizing the interaction between heparan sulfate proteoglycans (HSPGs) and hh, HSPGs being required for diffusion of hh morphogen. Not involved in wingless (wg) morphogen movement, suggesting that it may provide HSPG specificity for Hh. This chain is Protein shifted (shf), found in Drosophila melanogaster (Fruit fly).